Here is a 329-residue protein sequence, read N- to C-terminus: Sex comb on midleg-like protein 1 (329 aa).

Phosphoserine is present on residues Ser138 and Ser238. The SAM domain maps to 258 to 325; the sequence is WSVEAVVLFL…YYIDRLKQGK (68 aa).

It belongs to the SCM family.

The protein resides in the nucleus. Functionally, putative Polycomb group (PcG) protein. PcG proteins act by forming multiprotein complexes, which are required to maintain the transcriptionally repressive state of homeotic genes throughout development. May be involved in spermatogenesis during sexual maturation. The sequence is that of Sex comb on midleg-like protein 1 (SCML1) from Hoolock hoolock (Western hoolock gibbon).